Consider the following 138-residue polypeptide: Large-conductance mechanosensitive channel (138 aa).

3 consecutive transmembrane segments (helical) span residues 19-39, 40-60, and 81-101; these read VGVI…GDVI, MPVI…IGLS, and GSFL…FIVI.

This sequence belongs to the MscL family. As to quaternary structure, homopentamer.

It localises to the cell inner membrane. Its function is as follows. Channel that opens in response to stretch forces in the membrane lipid bilayer. May participate in the regulation of osmotic pressure changes within the cell. The polypeptide is Large-conductance mechanosensitive channel (Afipia carboxidovorans (strain ATCC 49405 / DSM 1227 / KCTC 32145 / OM5) (Oligotropha carboxidovorans)).